The primary structure comprises 315 residues: Adenine deaminase (315 aa).

3 residues coordinate Zn(2+): His14, His16, and His194. Residue Glu197 is the Proton donor of the active site. Asp275 contributes to the Zn(2+) binding site. Asp276 serves as a coordination point for substrate.

The protein belongs to the metallo-dependent hydrolases superfamily. Adenosine and AMP deaminases family. Adenine deaminase type 2 subfamily. Zn(2+) is required as a cofactor.

The enzyme catalyses adenine + H2O + H(+) = hypoxanthine + NH4(+). Its function is as follows. Catalyzes the hydrolytic deamination of adenine to hypoxanthine. Plays an important role in the purine salvage pathway and in nitrogen catabolism. In Pseudomonas putida (strain GB-1), this protein is Adenine deaminase.